The chain runs to 125 residues: uncharacterized protein (125 aa).

This is an uncharacterized protein from Caenorhabditis elegans.